Here is a 260-residue protein sequence, read N- to C-terminus: 5'-nucleotidase SurE (260 aa).

A divalent metal cation contacts are provided by Asp-8, Asp-9, Ser-39, and Asn-93.

This sequence belongs to the SurE nucleotidase family. The cofactor is a divalent metal cation.

The protein localises to the cytoplasm. It catalyses the reaction a ribonucleoside 5'-phosphate + H2O = a ribonucleoside + phosphate. Its function is as follows. Nucleotidase that shows phosphatase activity on nucleoside 5'-monophosphates. The sequence is that of 5'-nucleotidase SurE from Thermofilum pendens (strain DSM 2475 / Hrk 5).